A 197-amino-acid polypeptide reads, in one-letter code: RNA-binding protein with multiple splicing (197 aa).

Met-1 carries the post-translational modification N-acetylmethionine. A Phosphothreonine modification is found at Thr-12. The region spanning 24 to 101 (RTLFVSGLPL…QTLRLEFAKA (78 aa)) is the RRM domain. Residues 98–105 (FAKANTKM) are interaction with RNA. Residue Thr-113 is modified to Phosphothreonine.

In terms of assembly, homodimer; each protein chain binds one RNA molecule via the external surface of the homodimer. Interacts with RNA binding proteins MBNL1, RBFOX2, RBM4 and RBM14; the interaction allows cooperative assembly of stable cell-specific alternative splicing regulatory complexes. Also interacts with RBM47, MATR3 and ESRP2. Interacts with SMAD2, SMAD3 and SMAD4; the interactions are direct. In terms of tissue distribution, mRNA expressed in developing heart, with significantly higher expression in the atria relative to the ventricles.

The protein localises to the nucleus. The protein resides in the cytoplasm. It localises to the stress granule. Its subcellular location is the P-body. In terms of biological role, RNA binding protein that mediates the regulation of pre-mRNA alternative splicing (AS). Acts either as activator (FLNB, HSPG2, LIPA1, MYOCD, PTPRF and PPFIBP1) or repressor (TPM1, ACTN1, ITGA7, PIEZO1, LSM14B, MBNL1 and MBML2) of splicing events on specific pre-mRNA targets. Together with RNA binding proteins RBFOX2 and MBNL1/2, activates a splicing program associated with differentiated contractile vascular smooth muscle cells (SMC) by regulating AS of numerous pre-mRNA involved in actin cytoskeleton and focal adhesion machineries, suggesting a role in promoting a cell differentiated state. Binds to introns, exons and 3'-UTR associated with tandem CAC trinucleotide motifs separated by a variable spacer region, at a minimum as a dimer. The minimal length of RNA required for RBPMS-binding tandem CAC motifs is 15 nt, with spacing ranging from 1 to 9 nt. Can also bind to CA dinucleotide repeats. Mediates repression of TPM1 exon 3 by binding to CAC tandem repeats in the flanking intronic regions, followed by higher-order oligomerization and heterotypic interactions with other splicing regulators including MBNL1 and RBFOX2, which prevents assembly of ATP-dependent splicing complexes. This chain is RNA-binding protein with multiple splicing, found in Mus musculus (Mouse).